Consider the following 164-residue polypeptide: Ubiquitin-fold modifier-conjugating enzyme 1 (164 aa).

The Glycyl thioester intermediate role is filled by Cys-116.

It belongs to the ubiquitin-conjugating enzyme family. UFC1 subfamily.

Its function is as follows. E2-like enzyme which forms an intermediate with UFM1 via a thioester linkage. This is Ubiquitin-fold modifier-conjugating enzyme 1 from Drosophila sechellia (Fruit fly).